The chain runs to 243 residues: UPF0758 protein Cyan7425_1778 (243 aa).

In terms of domain architecture, MPN spans 112-235; the sequence is TIINDPAVAA…FRSLRQTTKL (124 aa). Zn(2+)-binding residues include His184, His186, and Asp197. The short motif at 184–197 is the JAMM motif element; the sequence is HNHPSGNVEPSPED.

The protein belongs to the UPF0758 family.

This is UPF0758 protein Cyan7425_1778 from Cyanothece sp. (strain PCC 7425 / ATCC 29141).